We begin with the raw amino-acid sequence, 85 residues long: U4-theraphotoxin-Hhn1r (85 aa).

A signal peptide spans 1-22 (MKVTLIAILTCAAVLVLHTTAA). The propeptide occupies 23 to 48 (EELEAESQLMEVGMPDTELAAVDEER). 3 disulfides stabilise this stretch: Cys-52/Cys-66, Cys-56/Cys-77, and Cys-71/Cys-82.

Belongs to the neurotoxin 12 (Hwtx-2) family. 02 (Hwtx-2) subfamily. Expressed by the venom gland.

The protein localises to the secreted. Postsynaptic neurotoxin. This is U4-theraphotoxin-Hhn1r from Cyriopagopus hainanus (Chinese bird spider).